Consider the following 275-residue polypeptide: 18S rRNA (guanine(1575)-N(7))-methyltransferase (275 aa).

Residues 256–275 (RGRKVAKDSKFTGRKRRHRF) form a disordered region. The short motif at 257–264 (GRKVAKDS) is the Nuclear localization signal element.

The protein belongs to the class I-like SAM-binding methyltransferase superfamily. BUD23/WBSCR22 family. In terms of assembly, interacts with TRM112. Interacts with ECM16.

The protein resides in the cytoplasm. It localises to the nucleus. The enzyme catalyses guanosine(1575) in yeast 18S rRNA + S-adenosyl-L-methionine = N(7)-methylguanosine(1575) in yeast 18S rRNA + S-adenosyl-L-homocysteine. Functionally, S-adenosyl-L-methionine-dependent methyltransferase that specifically methylates the N(7) position of guanine 1575 (m7G1575) in 18S rRNA. Requires the methyltransferase adapter protein TRM112 for full rRNA methyltransferase activity. Important for biogenesis end export of the 40S ribosomal subunit independent on its methyltransferase activity. Required for efficient cleavage of the primary 35S precursor rRNA at site A2. Involved in positioning the proximal bud pole signal. This Saccharomyces cerevisiae (strain ATCC 204508 / S288c) (Baker's yeast) protein is 18S rRNA (guanine(1575)-N(7))-methyltransferase (BUD23).